Reading from the N-terminus, the 419-residue chain is MTTQLEQAWELAKQRFAAVGIDVEEALRQLDRLPVSMHCWQGDDVSGFENPEGSLTGGIQATGNYPGKARNASELRADLEQAMRLIPGPKRLNLHAIYLESDTPVSRDQIKPEHFKNWVEWAKANQLGLDFNPSCFSHPLSADGFTLSHADDRIRQFWIDHCKASRRVSAYFGEQLGTPSVMNIWIPDGMKDITVDRLAPRQRLLAALDEVISEKLNPAHHIDAVESKLFGIGAESYTVGSNEFYLGYATSRQTALCLDAGHFHPTEVISDKISAAMLYVPQLLLHVSRPVRWDSDHVVLLDDETQAIASEIVRHDLFDRVHIGLDFFDASINRIAAWVIGTRNMKKALLRALLEPTAELRKLEAAGDYTARLALLEEQKSLPWQAVWEMYCQRHDTPAGSEWLENVRTYEKEILSRRG.

Mn(2+)-binding residues include His262, Asp294, and Asp296.

Belongs to the rhamnose isomerase family. Homotetramer. Mn(2+) serves as cofactor.

Its subcellular location is the cytoplasm. It catalyses the reaction L-rhamnopyranose = L-rhamnulose. Its pathway is carbohydrate degradation; L-rhamnose degradation; glycerone phosphate from L-rhamnose: step 1/3. Catalyzes the interconversion of L-rhamnose and L-rhamnulose. The sequence is that of L-rhamnose isomerase from Escherichia coli O45:K1 (strain S88 / ExPEC).